A 407-amino-acid chain; its full sequence is Tryptophan synthase beta chain (407 aa).

K91 is modified (N6-(pyridoxal phosphate)lysine).

Belongs to the TrpB family. In terms of assembly, tetramer of two alpha and two beta chains. It depends on pyridoxal 5'-phosphate as a cofactor.

The enzyme catalyses (1S,2R)-1-C-(indol-3-yl)glycerol 3-phosphate + L-serine = D-glyceraldehyde 3-phosphate + L-tryptophan + H2O. It functions in the pathway amino-acid biosynthesis; L-tryptophan biosynthesis; L-tryptophan from chorismate: step 5/5. Functionally, the beta subunit is responsible for the synthesis of L-tryptophan from indole and L-serine. This chain is Tryptophan synthase beta chain, found in Streptococcus pneumoniae serotype 2 (strain D39 / NCTC 7466).